Reading from the N-terminus, the 59-residue chain is Sec-independent protein translocase protein TatA 1 (59 aa).

The chain crosses the membrane as a helical span at residues 3 to 23 (FPLPWQLILILLVILVIFGAS).

This sequence belongs to the TatA/E family. Forms a complex with TatC.

Its subcellular location is the cell inner membrane. Its function is as follows. Part of the twin-arginine translocation (Tat) system that transports large folded proteins containing a characteristic twin-arginine motif in their signal peptide across membranes. TatA could form the protein-conducting channel of the Tat system. This chain is Sec-independent protein translocase protein TatA 1, found in Aquifex aeolicus (strain VF5).